The sequence spans 399 residues: Chorismate synthase (399 aa).

NADP(+) contacts are provided by arginine 40 and arginine 46. FMN-binding positions include 135-137, 256-257, glycine 301, 316-320, and arginine 342; these read RAS, QA, and KPIAT.

This sequence belongs to the chorismate synthase family. Homotetramer. Requires FMNH2 as cofactor.

It carries out the reaction 5-O-(1-carboxyvinyl)-3-phosphoshikimate = chorismate + phosphate. The protein operates within metabolic intermediate biosynthesis; chorismate biosynthesis; chorismate from D-erythrose 4-phosphate and phosphoenolpyruvate: step 7/7. Catalyzes the anti-1,4-elimination of the C-3 phosphate and the C-6 proR hydrogen from 5-enolpyruvylshikimate-3-phosphate (EPSP) to yield chorismate, which is the branch point compound that serves as the starting substrate for the three terminal pathways of aromatic amino acid biosynthesis. This reaction introduces a second double bond into the aromatic ring system. The protein is Chorismate synthase of Paenarthrobacter aurescens (strain TC1).